We begin with the raw amino-acid sequence, 515 residues long: Maturase K (515 aa).

Belongs to the intron maturase 2 family. MatK subfamily.

Its subcellular location is the plastid. The protein localises to the chloroplast. Its function is as follows. Usually encoded in the trnK tRNA gene intron. Probably assists in splicing its own and other chloroplast group II introns. The protein is Maturase K of Pinus yunnanensis (Yunnan pine).